A 244-amino-acid chain; its full sequence is Small ribosomal subunit protein uS3 (244 aa).

The KH type-2 domain maps to 38-106; sequence IRKYLNARLA…DIQINIFEVK (69 aa). Residues 217-244 form a disordered region; that stretch reads TQSKESGRGNNGGNNGGGKNFKRKKNNR. Over residues 225–235 the composition is skewed to gly residues; sequence GNNGGNNGGGK.

The protein belongs to the universal ribosomal protein uS3 family. Part of the 30S ribosomal subunit. Forms a tight complex with proteins S10 and S14.

In terms of biological role, binds the lower part of the 30S subunit head. Binds mRNA in the 70S ribosome, positioning it for translation. This is Small ribosomal subunit protein uS3 from Bacteroides fragilis (strain ATCC 25285 / DSM 2151 / CCUG 4856 / JCM 11019 / LMG 10263 / NCTC 9343 / Onslow / VPI 2553 / EN-2).